The chain runs to 471 residues: G2/mitotic-specific cyclin-1 (471 aa).

The protein belongs to the cyclin family. Cyclin AB subfamily.

In terms of biological role, essential for the control of the cell cycle at the G2/M (mitosis) transition. Interacts with the CDC2 protein kinase to form MPF. G2/M cyclins accumulate steadily during G2 and are abruptly destroyed at mitosis. In Saccharomyces cerevisiae (strain ATCC 204508 / S288c) (Baker's yeast), this protein is G2/mitotic-specific cyclin-1 (CLB1).